A 205-amino-acid chain; its full sequence is Large ribosomal subunit protein uL3 (205 aa).

The protein belongs to the universal ribosomal protein uL3 family. In terms of assembly, part of the 50S ribosomal subunit. Forms a cluster with proteins L14 and L19.

Functionally, one of the primary rRNA binding proteins, it binds directly near the 3'-end of the 23S rRNA, where it nucleates assembly of the 50S subunit. The protein is Large ribosomal subunit protein uL3 of Thermosipho africanus (strain TCF52B).